We begin with the raw amino-acid sequence, 428 residues long: Bacteriochlorophyll synthase 44.5 kDa chain (428 aa).

12 helical membrane-spanning segments follow: residues 3-23 (LGWL…AVVV), 32-52 (LMVV…ALHY), 73-93 (FFVI…AVAV), 115-135 (GFGV…ATEP), 144-164 (ITWL…GHFL), 172-192 (LLWI…LAVW), 225-245 (AFTF…LILE), 269-289 (GVFF…IGSL), 291-311 (GWVV…VALG), 317-337 (ALVP…VAAI), 358-378 (LWGA…AGAA), and 393-413 (LVFG…TGVV).

It belongs to the PucC family.

Its subcellular location is the membrane. It participates in porphyrin-containing compound metabolism; bacteriochlorophyll biosynthesis (light-independent). The protein is Bacteriochlorophyll synthase 44.5 kDa chain of Rhodobacter capsulatus (strain ATCC BAA-309 / NBRC 16581 / SB1003).